The following is a 638-amino-acid chain: Threonine--tRNA ligase (638 aa).

Positions 1–61 (MPVITLPDGS…EHDARIEIVT (61 aa)) constitute a TGS domain. Positions 243 to 534 (DHRKIAKAQD…LIEEYAGHFP (292 aa)) are catalytic. Zn(2+) contacts are provided by cysteine 334, histidine 385, and histidine 511.

Belongs to the class-II aminoacyl-tRNA synthetase family. In terms of assembly, homodimer. It depends on Zn(2+) as a cofactor.

It is found in the cytoplasm. The catalysed reaction is tRNA(Thr) + L-threonine + ATP = L-threonyl-tRNA(Thr) + AMP + diphosphate + H(+). Its function is as follows. Catalyzes the attachment of threonine to tRNA(Thr) in a two-step reaction: L-threonine is first activated by ATP to form Thr-AMP and then transferred to the acceptor end of tRNA(Thr). Also edits incorrectly charged L-seryl-tRNA(Thr). In Idiomarina loihiensis (strain ATCC BAA-735 / DSM 15497 / L2-TR), this protein is Threonine--tRNA ligase.